The chain runs to 335 residues: Fimbrial adhesin PapGIII (335 aa).

Positions methionine 1–alanine 21 are cleaved as a signal peptide.

The protein belongs to the adhesin PapG family.

The protein localises to the secreted. Its subcellular location is the fimbrium. Its function is as follows. Tip adhesin component of type P pili that binds preferentially to Gal-alpha(1-4)-Gal-containing glycolipids such as globoside. This tip is common in E.coli strains that cause human cystitis, but rare in pyelonephritic isolates. The polypeptide is Fimbrial adhesin PapGIII (Escherichia coli).